Reading from the N-terminus, the 188-residue chain is Pyridoxal 5'-phosphate synthase subunit PdxT (188 aa).

Residue 46 to 48 coordinates L-glutamine; it reads GES. Cys78 acts as the Nucleophile in catalysis. Residues Arg105 and 133–134 each bind L-glutamine; that span reads IR. Residues His169 and Glu171 each act as charge relay system in the active site.

The protein belongs to the glutaminase PdxT/SNO family. As to quaternary structure, in the presence of PdxS, forms a dodecamer of heterodimers. Only shows activity in the heterodimer.

The catalysed reaction is aldehydo-D-ribose 5-phosphate + D-glyceraldehyde 3-phosphate + L-glutamine = pyridoxal 5'-phosphate + L-glutamate + phosphate + 3 H2O + H(+). The enzyme catalyses L-glutamine + H2O = L-glutamate + NH4(+). The protein operates within cofactor biosynthesis; pyridoxal 5'-phosphate biosynthesis. Functionally, catalyzes the hydrolysis of glutamine to glutamate and ammonia as part of the biosynthesis of pyridoxal 5'-phosphate. The resulting ammonia molecule is channeled to the active site of PdxS. The polypeptide is Pyridoxal 5'-phosphate synthase subunit PdxT (Thermosipho africanus (strain TCF52B)).